The following is a 139-amino-acid chain: ATP synthase epsilon chain (139 aa).

It belongs to the ATPase epsilon chain family. As to quaternary structure, F-type ATPases have 2 components, CF(1) - the catalytic core - and CF(0) - the membrane proton channel. CF(1) has five subunits: alpha(3), beta(3), gamma(1), delta(1), epsilon(1). CF(0) has three main subunits: a, b and c.

It localises to the cell membrane. Functionally, produces ATP from ADP in the presence of a proton gradient across the membrane. This is ATP synthase epsilon chain from Streptococcus pneumoniae serotype 2 (strain D39 / NCTC 7466).